The following is a 429-amino-acid chain: Ribosomal RNA small subunit methyltransferase B (429 aa).

S-adenosyl-L-methionine is bound by residues 254-260, aspartate 277, aspartate 303, and aspartate 322; that span reads CAAPGGK. Cysteine 375 functions as the Nucleophile in the catalytic mechanism.

It belongs to the class I-like SAM-binding methyltransferase superfamily. RsmB/NOP family.

It localises to the cytoplasm. The enzyme catalyses cytidine(967) in 16S rRNA + S-adenosyl-L-methionine = 5-methylcytidine(967) in 16S rRNA + S-adenosyl-L-homocysteine + H(+). Functionally, specifically methylates the cytosine at position 967 (m5C967) of 16S rRNA. This Pectobacterium atrosepticum (strain SCRI 1043 / ATCC BAA-672) (Erwinia carotovora subsp. atroseptica) protein is Ribosomal RNA small subunit methyltransferase B.